The primary structure comprises 492 residues: Probable cobyric acid synthase (492 aa).

The region spanning 252 to 444 is the GATase cobBQ-type domain; the sequence is PIEVNVVKFS…FHGILENFEF (193 aa). Catalysis depends on cysteine 330, which acts as the Nucleophile. Residue histidine 436 is part of the active site.

Belongs to the CobB/CobQ family. CobQ subfamily.

The protein operates within cofactor biosynthesis; adenosylcobalamin biosynthesis. Its function is as follows. Catalyzes amidations at positions B, D, E, and G on adenosylcobyrinic A,C-diamide. NH(2) groups are provided by glutamine, and one molecule of ATP is hydrogenolyzed for each amidation. The protein is Probable cobyric acid synthase of Methanococcus maripaludis (strain DSM 14266 / JCM 13030 / NBRC 101832 / S2 / LL).